The sequence spans 321 residues: Calcium-regulated beta-propeller protein CarP (321 aa).

The first 42 residues, 1 to 42, serve as a signal peptide directing secretion; it reads MTIHAQTPEPFSMSRAFTPRRLLLAVLLVALSALVLLGQSFR.

Belongs to the YjiK family.

The protein resides in the cell inner membrane. Plays a role in intracellular Ca(2+) homeostasis. Involved in modulating Ca(2+)-induced swarming motility and pyocyanine production. Plays a role in regulating virulence in a Ca(2+)-dependent manner. Involved in cell protection against oxidative stress in the presence of elevated Ca(2+). This is Calcium-regulated beta-propeller protein CarP from Pseudomonas aeruginosa (strain ATCC 15692 / DSM 22644 / CIP 104116 / JCM 14847 / LMG 12228 / 1C / PRS 101 / PAO1).